The sequence spans 607 residues: Actin-related protein 5 (607 aa).

Residue Lys283 forms a Glycyl lysine isopeptide (Lys-Gly) (interchain with G-Cter in SUMO2) linkage. Coiled coils occupy residues 288–327 (TLTS…LDRL) and 355–384 (EELQ…NLEV). Residues 584 to 596 (SRSSDAQASSKGS) are compositionally biased toward low complexity. The interval 584-607 (SRSSDAQASSKGSAAGGGGAGEQA) is disordered. Residues 597 to 607 (AAGGGGAGEQA) are compositionally biased toward gly residues.

The protein belongs to the actin family. ARP5 subfamily. As to quaternary structure, component of the chromatin remodeling INO80 complex; specifically part of a complex module associated with the helicase ATP-binding and the helicase C-terminal domain of INO80. Interacts with DDB1. Interacts with ACTR8; the interaction is observed in asynchronous (interphase) cells but not in metaphase-arrested cells indicative for a possible dissociation of the INO80 complex in mitotic cells.

The protein resides in the nucleus. It is found in the cytoplasm. Proposed core component of the chromatin remodeling INO80 complex which is involved in transcriptional regulation, DNA replication and probably DNA repair. Involved in DNA double-strand break repair and UV-damage excision repair. The chain is Actin-related protein 5 (ACTR5) from Homo sapiens (Human).